The chain runs to 176 residues: MRKVTLMDVFTHPIAQKYLQRSGVAHAIACAYHAYRLSVKADINPDLAAKAALLHDIGHYEWYTDGKWDYEKYKRNDIHAIKGAERAHKLLIRLGEEPKAAKEIALAILLHTDSYLPEGELDKNTLQQIVKKADELDEEPGGHHHYRQIDPSTARKKIEKLDQLIDQAQASVIKPV.

The HD domain occupies 23–139; the sequence is GVAHAIACAY…VKKADELDEE (117 aa).

This is Putative phosphohydrolase YueE (yueE) from Bacillus subtilis (strain 168).